A 420-amino-acid chain; its full sequence is Nucleobindin-2 (420 aa).

A signal peptide spans M1–A24. A DNA-binding region spans residues R171–P223. A disordered region spans residues T194–S225. The interval K213 to T420 is binds to necdin. EF-hand domains are found at residues P241–K276 and E293–L328. 8 residues coordinate Ca(2+): D254, N256, D258, E265, D306, N308, D310, and E317. A GBA motif is present at residues E304–E334. Phosphoserine is present on S332. Over residues D366–K386 the composition is skewed to basic and acidic residues. A disordered region spans residues D366–T420. A compositionally biased stretch (low complexity) spans Q387–L396.

Belongs to the nucleobindin family. In terms of assembly, interacts (via GBA motif) with guanine nucleotide-binding protein G(i) alpha subunit GNAI3. Preferentially interacts with inactive rather than active GNAI3. Interaction with GNAI3 is inhibited when NUCB2 binds calcium, probably due to a conformational change which renders the GBA motif inaccessible. Binds to the postmitotic growth suppressor NDN; coexpression abolishes NUCB2 secretion. Interacts with MC4R.

The protein resides in the golgi apparatus. Its subcellular location is the endoplasmic reticulum. It localises to the nucleus envelope. The protein localises to the membrane. It is found in the cytoplasm. The protein resides in the secreted. Calcium-binding protein which may have a role in calcium homeostasis. Acts as a non-receptor guanine nucleotide exchange factor which binds to and activates guanine nucleotide-binding protein (G-protein) alpha subunit GNAI3. In terms of biological role, anorexigenic peptide, seems to play an important role in hypothalamic pathways regulating food intake and energy homeostasis, acting in a leptin-independent manner. May also exert hypertensive roles and modulate blood pressure through directly acting on peripheral arterial resistance. In intestinal epithelial cells, plays a role in the inhibition of hepatic glucose production via MC4R receptor leading to increased cyclic adenosine monophosphate (cAMP) levels and glucagon-like peptide 1 (GLP-1) secretion. The chain is Nucleobindin-2 (Nucb2) from Rattus norvegicus (Rat).